Consider the following 126-residue polypeptide: MAKSLRSKWRRKMRAEKRKKVAPKELARLKSALGQGEKGEISMKDVAEIATVVPPEKVKQKPADVDMQEEEADGGKMDLDTKRNKKTMLDEHGRYPVWMNQRQAKKLKAKRVGKNGKPKPKKRLAW.

Positions 1-21 are enriched in basic residues; that stretch reads MAKSLRSKWRRKMRAEKRKKV. Disordered stretches follow at residues 1-22 and 53-126; these read MAKS…KKVA and VPPE…RLAW. Over residues 73–94 the composition is skewed to basic and acidic residues; that stretch reads DGGKMDLDTKRNKKTMLDEHGR. Residues 103 to 126 are compositionally biased toward basic residues; that stretch reads QAKKLKAKRVGKNGKPKPKKRLAW.

This sequence belongs to the learning-associated protein family.

Its subcellular location is the nucleus. The protein localises to the nucleolus. It localises to the chromosome. Regulates dendritic and spine growth and synaptic transmission. The chain is Protein LLP homolog (llph) from Danio rerio (Zebrafish).